The following is a 262-amino-acid chain: Small ribosomal subunit protein eS4 (262 aa).

Residues 42–104 enclose the S4 RNA-binding domain; that stretch reads LPLILILRNR…TNEDFRLLYD (63 aa).

The protein belongs to the eukaryotic ribosomal protein eS4 family.

The protein localises to the cytoplasm. The chain is Small ribosomal subunit protein eS4 (RPS4) from Gossypium hirsutum (Upland cotton).